The following is a 562-amino-acid chain: Probable sesquiterpene synthase (562 aa).

Mg(2+) contacts are provided by Asp315, Asp319, and Glu467. A DDXXD motif motif is present at residues 315–319 (DDIYD).

It belongs to the terpene synthase family. Tpsa subfamily. Requires Mg(2+) as cofactor. Mn(2+) is required as a cofactor.

Functionally, sesquiterpene synthase. This Santalum spicatum (Australian sandalwood) protein is Probable sesquiterpene synthase (SesquiTPS).